We begin with the raw amino-acid sequence, 67 residues long: Conotoxin TsMMSK-011 (67 aa).

Positions 1 to 20 (MMSKLGVLLTICLLLFPLTA) are cleaved as a signal peptide. Residues 21–50 (VQLDGDQPADLPALRTQDISTDHSPWFDPV) constitute a propeptide that is removed on maturation. 3 disulfides stabilise this stretch: C53–C65, C54–C61, and C58–C64. P63 carries the post-translational modification 4-hydroxyproline.

It belongs to the conotoxin M superfamily. As to expression, expressed by the venom duct.

The protein localises to the secreted. This is Conotoxin TsMMSK-011 from Conus tessulatus (Tessellate cone).